A 265-amino-acid polypeptide reads, in one-letter code: UPF0294 protein KPK_4510 (265 aa).

This sequence belongs to the UPF0294 family.

The protein resides in the cytoplasm. This Klebsiella pneumoniae (strain 342) protein is UPF0294 protein KPK_4510.